A 476-amino-acid polypeptide reads, in one-letter code: Ribosomal protein uS12 methylthiotransferase RimO (476 aa).

The MTTase N-terminal domain maps to 7–123; sequence KSLYMMTLGC…IGDLLAAEAS (117 aa). 6 residues coordinate [4Fe-4S] cluster: cysteine 16, cysteine 52, cysteine 86, cysteine 158, cysteine 162, and cysteine 165. The Radical SAM core domain occupies 144–373; that stretch reads SMPKYTAYLK…MAIQKRINRE (230 aa). One can recognise a TRAM domain in the interval 376–444; it reads KKLVGKRLEV…DYDLVARVVE (69 aa). Residues 445-459 are compositionally biased toward basic and acidic residues; sequence RPDPKQREHTARDAH. Residues 445–476 are disordered; that stretch reads RPDPKQREHTARDAHPAPLPVAAMQRPAPRAE.

This sequence belongs to the methylthiotransferase family. RimO subfamily. Requires [4Fe-4S] cluster as cofactor.

The protein localises to the cytoplasm. The enzyme catalyses L-aspartate(89)-[ribosomal protein uS12]-hydrogen + (sulfur carrier)-SH + AH2 + 2 S-adenosyl-L-methionine = 3-methylsulfanyl-L-aspartate(89)-[ribosomal protein uS12]-hydrogen + (sulfur carrier)-H + 5'-deoxyadenosine + L-methionine + A + S-adenosyl-L-homocysteine + 2 H(+). Its function is as follows. Catalyzes the methylthiolation of an aspartic acid residue of ribosomal protein uS12. This Myxococcus xanthus (strain DK1622) protein is Ribosomal protein uS12 methylthiotransferase RimO.